Reading from the N-terminus, the 65-residue chain is Large ribosomal subunit protein bL35 (65 aa).

This sequence belongs to the bacterial ribosomal protein bL35 family.

The polypeptide is Large ribosomal subunit protein bL35 (Synechococcus sp. (strain CC9605)).